Consider the following 153-residue polypeptide: UPF0311 protein RPA1785 (153 aa).

Belongs to the UPF0311 family.

The protein is UPF0311 protein RPA1785 of Rhodopseudomonas palustris (strain ATCC BAA-98 / CGA009).